The primary structure comprises 286 residues: 3-hydroxyanthranilate 3,4-dioxygenase (286 aa).

Positions 1-160 (MERRLGVRAW…SEQYRTGKPI (160 aa)) are domain A (catalytic). O2 is bound at residue Arg43. Fe cation-binding residues include His47, Glu53, and His91. Glu53 is a substrate binding site. 2 residues coordinate substrate: Arg95 and Glu105. The linker stretch occupies residues 161–177 (PDQLLKEPPFPLSTRSI). Residues 178-286 (MEPMSLDAWL…QDPACKKPLG (109 aa)) form a domain B region.

The protein belongs to the 3-HAO family. As to quaternary structure, monomer. Fe(2+) is required as a cofactor.

The protein resides in the cytoplasm. The protein localises to the cytosol. It catalyses the reaction 3-hydroxyanthranilate + O2 = (2Z,4Z)-2-amino-3-carboxymuconate 6-semialdehyde. The protein operates within cofactor biosynthesis; NAD(+) biosynthesis; quinolinate from L-kynurenine: step 3/3. Catalyzes the oxidative ring opening of 3-hydroxyanthranilate to 2-amino-3-carboxymuconate semialdehyde, which spontaneously cyclizes to quinolinate. This Homo sapiens (Human) protein is 3-hydroxyanthranilate 3,4-dioxygenase.